The sequence spans 856 residues: MAVARVDGALAPGEGSVVNWSGQGLQKLGANLPCEADVHTLILDKNQIIKLENLEKCKQLIQLSVANNRLVRMMGVAKLTQLRVLNLPHNSIGCVEGLKDLVHLEWLNLAGNNLKTMEQVNSCTALQHLDLSDNNIPQIGDVSKLISLKTLLLHGNIITSLRMAPAYLPRNLSILSLAENEIRDLNEISFLASLSELEQLSIMNNPCVMATPSIPGFDYRPFIVSWCLNLRVLDGYVISQKESLKAEWLYSQGKGRSYRPGQHIQLVQYLATVCPLTSALGLQTAEDAKLEKILSKQRFHQRQLMSQSQDEELSPLAAVETRVHRTPECSSPGQDFQESEPVLQINSWVGISSNDDQLYAVKNNFPAAAHAARYSRNDLHLEDIQTDEDKLNCSLLSSESTFMPVASGLSPVSPTVELRLQGINLGLEDDDGADEFTKGLENQDEDKDKEKSLWDMSESCVEMLKRKISTEVSEAAGLLPCPKSVIISAALKEDTHSLTSLPESAGHSASRTEANSEEAMSPATSEKFPCRILTQRPAALGQDKVTLQKLNAAATKLQACWRGFYTRNYNQQAKGVRYEIRLRRMQEHIVCLTDEVRRLRKERDEERVKTFVQEEAVRFLWNEVRSVQAWQQTVEQRLASWPPDVPPISSTLASPKPPLFPHHQDPSSDQSSDWLVAEDEAAQGRSAPDFPDSGFHSSLTEQVPCLQDSLDFEKSSVESSENSVLGNSADTVKCVKDRDSEATAEEHSDCSRESSASEQDNTLLQQYLTSVQQLDDAAEAADSDDVAGDGKRHLACSPERFDASSDSETHRVASTSQDEISQTPENCQLNEEAQGQPPECDPAFQGLHVGVTVQPV.

LRR repeat units lie at residues 37 to 58 (DVHT…EKCK), 59 to 80 (QLIQ…AKLT), 81 to 102 (QLRV…KDLV), 103 to 124 (HLEW…NSCT), 125 to 146 (ALQH…SKLI), 147 to 168 (SLKT…PAYL), 171 to 192 (NLSI…SFLA), and 196 to 205 (ELEQLSIMNN). Residues 211–249 (TPSIPGFDYRPFIVSWCLNLRVLDGYVISQKESLKAEWL) form the LRRCT domain. A CCP110-binding region spans residues 300–742 (HQRQLMSQSQ…KCVKDRDSEA (443 aa)). 2 positions are modified to phosphoserine: Ser308 and Ser410. Residues 430–451 (DDGADEFTKGLENQDEDKDKEK) are disordered. Ser497 is modified (phosphoserine). Polar residues predominate over residues 498–513 (LTSLPESAGHSASRTE). The segment at 498-525 (LTSLPESAGHSASRTEANSEEAMSPATS) is disordered. Ser521 is modified (phosphoserine). Thr534 carries the phosphothreonine modification. One can recognise an IQ domain in the interval 550–579 (LNAAATKLQACWRGFYTRNYNQQAKGVRYE). An interaction with MPHOSPH9 region spans residues 579–853 (EIRLRRMQEH…FQGLHVGVTV (275 aa)). Disordered regions lie at residues 646–672 (PPIS…DQSS) and 737–840 (DRDS…PPEC). Over residues 737 to 752 (DRDSEATAEEHSDCSR) the composition is skewed to basic and acidic residues. Residues 753 to 773 (ESSASEQDNTLLQQYLTSVQQ) show a composition bias toward polar residues. Phosphoserine is present on Ser755. Over residues 776–787 (DAAEAADSDDVA) the composition is skewed to acidic residues. Basic and acidic residues predominate over residues 799-811 (ERFDASSDSETHR). Residues 812–833 (VASTSQDEISQTPENCQLNEEA) show a composition bias toward polar residues.

Interacts with CALM1, CEP76, KIF24 and TALPID3. Interacts with CCP110. ENKD1 competes with CEP97 for binding to CCP110, destabilizing the interaction between CP110 and CEP97 which promotes the removal of CCP110 and CEP97 from the mother centriole and allows the initiation of ciliogenesis. Via its interaction with CCP110, may indirectly interact with HERC2 and NEURL4. Interacts with MPHOSPH9.

The protein resides in the cytoplasm. The protein localises to the cytoskeleton. Its subcellular location is the microtubule organizing center. It is found in the centrosome. It localises to the centriole. In terms of biological role, acts as a key negative regulator of ciliogenesis in collaboration with CCP110 by capping the mother centriole thereby preventing cilia formation. Required for recruitment of CCP110 to the centrosome. This Mus musculus (Mouse) protein is Centrosomal protein of 97 kDa (Cep97).